The primary structure comprises 105 residues: MRPGKRRPLTRLPFALLSWGMIGLLRVYQYGISPLLGPRCRFWPSCSQYAVEAIQVHGPLKGAWLALKRIVKCHPGHPGGVDPVPPGPHETPRKTSTHDDEPPSR.

The segment at 76–105 is disordered; it reads GHPGGVDPVPPGPHETPRKTSTHDDEPPSR. Positions 90–105 are enriched in basic and acidic residues; sequence ETPRKTSTHDDEPPSR.

This sequence belongs to the UPF0161 family.

The protein resides in the cell inner membrane. Could be involved in insertion of integral membrane proteins into the membrane. The chain is Putative membrane protein insertion efficiency factor from Chromohalobacter salexigens (strain ATCC BAA-138 / DSM 3043 / CIP 106854 / NCIMB 13768 / 1H11).